Consider the following 242-residue polypeptide: Mannose-P-dolichol utilization defect 1 protein homolog (242 aa).

In terms of domain architecture, PQ-loop 1 spans 37-95; the sequence is LSRGLGFAITLGSILLFVPQILKIQAARSAQGISAASQLLALVGAIGTASYSYRSGFVF. 7 helical membrane-spanning segments follow: residues 40 to 60, 68 to 88, 98 to 118, 120 to 140, 148 to 168, 180 to 200, and 207 to 227; these read GLGF…ILKI, GISA…ASYS, WGDS…IFLF, GQTM…YGVV, TLTA…LLQI, LSLI…FTSV, and LLIV…AQFF. Residues 152–202 form the PQ-loop 2 domain; it reads VQTAGIPIVVVSKLLQISQNYRAQSTGQLSLISVFLQFAGTLARVFTSVQD.

It belongs to the MPDU1 (TC 2.A.43.3) family.

The protein resides in the membrane. In Caenorhabditis elegans, this protein is Mannose-P-dolichol utilization defect 1 protein homolog.